The sequence spans 318 residues: NADH-ubiquinone oxidoreductase chain 1 (318 aa).

8 helical membrane passes run 3–23, 70–90, 100–120, 146–166, 171–191, 222–242, 254–273, and 294–314; these read LITL…LTLV, MFII…TPLP, LGIL…LWSG, LAII…TTLI, YIWL…STLA, LFFL…TILF, LYTT…FLWI, and LPLT…LASI.

This sequence belongs to the complex I subunit 1 family.

Its subcellular location is the mitochondrion inner membrane. The enzyme catalyses a ubiquinone + NADH + 5 H(+)(in) = a ubiquinol + NAD(+) + 4 H(+)(out). In terms of biological role, core subunit of the mitochondrial membrane respiratory chain NADH dehydrogenase (Complex I) that is believed to belong to the minimal assembly required for catalysis. Complex I functions in the transfer of electrons from NADH to the respiratory chain. The immediate electron acceptor for the enzyme is believed to be ubiquinone. This Phyllostomus elongatus (Lesser spear-nosed bat) protein is NADH-ubiquinone oxidoreductase chain 1 (MT-ND1).